Here is a 485-residue protein sequence, read N- to C-terminus: Aspartyl/glutamyl-tRNA(Asn/Gln) amidotransferase subunit B (485 aa).

This sequence belongs to the GatB/GatE family. GatB subfamily. As to quaternary structure, heterotrimer of A, B and C subunits.

It catalyses the reaction L-glutamyl-tRNA(Gln) + L-glutamine + ATP + H2O = L-glutaminyl-tRNA(Gln) + L-glutamate + ADP + phosphate + H(+). The enzyme catalyses L-aspartyl-tRNA(Asn) + L-glutamine + ATP + H2O = L-asparaginyl-tRNA(Asn) + L-glutamate + ADP + phosphate + 2 H(+). In terms of biological role, allows the formation of correctly charged Asn-tRNA(Asn) or Gln-tRNA(Gln) through the transamidation of misacylated Asp-tRNA(Asn) or Glu-tRNA(Gln) in organisms which lack either or both of asparaginyl-tRNA or glutaminyl-tRNA synthetases. The reaction takes place in the presence of glutamine and ATP through an activated phospho-Asp-tRNA(Asn) or phospho-Glu-tRNA(Gln). The sequence is that of Aspartyl/glutamyl-tRNA(Asn/Gln) amidotransferase subunit B from Borrelia duttonii (strain Ly).